We begin with the raw amino-acid sequence, 147 residues long: Hemoglobin subunit delta (147 aa).

The Globin domain occupies 3-147; that stretch reads NLTAAEKTQV…VANALAHKYH (145 aa). Heme b contacts are provided by His64 and His93.

This sequence belongs to the globin family. In terms of assembly, heterotetramer of two delta chains and two alpha chains. Red blood cells.

In Loxodonta africana (African elephant), this protein is Hemoglobin subunit delta (HBD).